The chain runs to 306 residues: Small ribosomal subunit protein uS2 (306 aa).

Residue Ser2 is modified to N-acetylserine. Laminin-binding stretches follow at residues 161-180 (IPCN…MLAR) and 205-229 (RDPE…EFQG). 5 [DE]-W-[ST] repeats span residues 230–232 (EWT), 245–247 (DWS), 276–278 (DWS), 286–288 (DWS), and 304–306 (EWS). A laminin-binding region spans residues 242-306 (EVADWSEGVQ…EWTGTTTEWS (65 aa)). Positions 247–306 (SEGVQVPSVPIQQFTAERTDVPPAPKPTEDWSTQPASTDDWSAAPTAQASEWTGTTTEWS) are disordered. The span at 276–306 (DWSTQPASTDDWSAAPTAQASEWTGTTTEWS) shows a compositional bias: polar residues.

This sequence belongs to the universal ribosomal protein uS2 family. As to quaternary structure, monomer (37LRP) and homodimer (67LR). Component of the small ribosomal subunit. Mature ribosomes consist of a small (40S) and a large (60S) subunit. The 40S subunit contains about 33 different proteins and 1 molecule of RNA (18S). The 60S subunit contains about 49 different proteins and 3 molecules of RNA (28S, 5.8S and 5S). Interacts with rps21. Interacts with several laminins including at least lamb1. Interacts with mdk. In terms of processing, acylated. Acylation may be a prerequisite for conversion of the monomeric 37 kDa laminin receptor precursor (37LRP) to the mature dimeric 67 kDa laminin receptor (67LR), and may provide a mechanism for membrane association. Cleaved by stromelysin-3 (ST3) at the cell surface. Cleavage by stromelysin-3 may be a mechanism to alter cell-extracellular matrix interactions.

It is found in the cell membrane. It localises to the cytoplasm. Its subcellular location is the nucleus. Its function is as follows. Required for the assembly and/or stability of the 40S ribosomal subunit. Required for the processing of the 20S rRNA-precursor to mature 18S rRNA in a late step of the maturation of 40S ribosomal subunits. Also functions as a cell surface receptor for laminin. Plays a role in cell adhesion to the basement membrane and in the consequent activation of signaling transduction pathways. May play a role in cell fate determination and tissue morphogenesis. In Xenopus laevis (African clawed frog), this protein is Small ribosomal subunit protein uS2 (rpsa).